A 709-amino-acid chain; its full sequence is Transcriptional factor SWI5 (709 aa).

Phosphoserine is present on Ser225. The segment covering 245 to 264 has biased composition (polar residues); that stretch reads LSPMISPPMSNTSFTGSPSR. The segment at 245-267 is disordered; the sequence is LSPMISPPMSNTSFTGSPSRRNN. Phosphoserine is present on residues Ser278 and Ser300. Thr339 carries the post-translational modification Phosphothreonine. Ser376 carries the post-translational modification Phosphoserine. A disordered region spans residues 443 to 483; the sequence is LKPPSQQARHREGVFNDLDPNVLTKNTDNEGDDNEENEPES. Over residues 471–480 the composition is skewed to acidic residues; that stretch reads NEGDDNEENE. 3 positions are modified to phosphoserine: Ser488, Ser492, and Ser505. Ser522 is subject to Phosphoserine; by CDC28. 3 C2H2-type zinc fingers span residues 550–574, 580–604, and 609–632; these read FECL…IQTH, YSCD…KKSH, and YACP…RMIC. The short motif at 635 to 659 is the Nuclear localization signal element; sequence GKKYENVVIKRSPRKRGRPRKDGTS. A disordered region spans residues 644 to 677; it reads KRSPRKRGRPRKDGTSSVSSSPIKENINKDHNGQ. Ser646 is subject to Phosphoserine; by CDC28. The segment at residues 647-659 is a DNA-binding region (a.T hook); it reads PRKRGRPRKDGTS. A Phosphoserine; by CDC28 modification is found at Ser664.

In terms of processing, cell cycle-dependent phosphorylation of three serine residues prevents SWI5 from entering the nucleus, and it accumulates in the cytoplasm. As a consequence of CDC28 kinase inactivation at the end of anaphase, the three serine residues are dephosphorylated and SWI5 enters the nucleus to activate transcription. It is then rapidly degraded. Threonine phosphorylation also seems to occur. Post-translationally, phosphorylated by PHO85.

It is found in the nucleus. Its subcellular location is the cytoplasm. Determines the mother-cell-specific transcription of the HO endonuclease gene that is responsible for the initiation of mating-type switching in yeast. Recognizes a specific sequence in the promoter of the HO gene. Activates EGT2 transcription in a concentration-dependent manner. Synthesized during G2 and early mitosis. The protein is Transcriptional factor SWI5 (SWI5) of Saccharomyces cerevisiae (strain ATCC 204508 / S288c) (Baker's yeast).